Here is a 190-residue protein sequence, read N- to C-terminus: Corticoliberin (190 aa).

The N-terminal stretch at 1–24 (MRLRLLVSVGVLLVALLPSPPCRA) is a signal peptide. The propeptide occupies 25-147 (LLSRGPIPGA…QEAPAARKRR (123 aa)). 2 disordered regions span residues 33–57 (GARQASQHPQPLSFFQPPPQPQEPQ) and 116–151 (RRPFDSPAGPAERGTENALGSRQEAPAARKRRSQEP). An Alanine amide modification is found at Ala188.

It belongs to the sauvagine/corticotropin-releasing factor/urotensin I family. As to quaternary structure, interacts (via C-terminus) with CRFR1 (via N-terminal extracellular domain). In terms of tissue distribution, produced by the hypothalamus.

It localises to the secreted. Hormone regulating the release of corticotropin from pituitary gland. Induces NLRP6 in intestinal epithelial cells, hence may influence gut microbiota profile. The chain is Corticoliberin (CRH) from Bos taurus (Bovine).